The primary structure comprises 357 residues: Olfactory receptor 2B2 (357 aa).

Over 1 to 25 (MNWVNKSVPQEFILLVFSDQPWLEI) the chain is Extracellular. Asparagine 5 is a glycosylation site (N-linked (GlcNAc...) asparagine). Residues 26–49 (PPFVMFLFSYILTIFGNLTIILVS) traverse the membrane as a helical segment. The Cytoplasmic segment spans residues 50-57 (HVDFKLHT). Residues 58 to 79 (PMYFFLSNLSLLDLCYTTSTVP) traverse the membrane as a helical segment. Residues 80–100 (QMLVNICNTRKVISYGGCVAQ) are Extracellular-facing. Residues cysteine 97 and cysteine 189 are joined by a disulfide bond. A helical transmembrane segment spans residues 101–120 (LFIFLALGSTECLLLAVMCF). Residues 121–139 (DRFVAICRPLHYSIIMHQR) lie on the Cytoplasmic side of the membrane. Residues 140–158 (LCFQLAAASWISGFSNSVL) form a helical membrane-spanning segment. Residues 159–195 (QSTWTLKMPLCGHKEVDHFFCEVPALLKLSCVDTTAN) are Extracellular-facing. The helical transmembrane segment at 196–219 (EAELFFISVLFLLIPVTLILISYA) threads the bilayer. The Cytoplasmic portion of the chain corresponds to 220–236 (FIVQAVLRIQSAEGQRK). The chain crosses the membrane as a helical span at residues 237 to 259 (AFGTCGSHLIVVSLFYGTAISMY). The Extracellular portion of the chain corresponds to 260–272 (LQPPSPSSKDRGK). A helical transmembrane segment spans residues 273 to 292 (MVSLFCGIIAPMLNPLIYTL). The Cytoplasmic portion of the chain corresponds to 293 to 357 (RNKEVKEAFK…YCNLPQRKFP (65 aa)).

Belongs to the G-protein coupled receptor 1 family.

It is found in the cell membrane. Its function is as follows. Odorant receptor. The chain is Olfactory receptor 2B2 (OR2B2) from Homo sapiens (Human).